A 1420-amino-acid polypeptide reads, in one-letter code: DNA-directed RNA polymerase subunit beta' (1420 aa).

Cysteine 72, cysteine 74, cysteine 87, and cysteine 90 together coordinate Zn(2+). Mg(2+) contacts are provided by aspartate 462, aspartate 464, and aspartate 466. Residues cysteine 816, cysteine 896, cysteine 903, and cysteine 906 each contribute to the Zn(2+) site.

Belongs to the RNA polymerase beta' chain family. As to quaternary structure, the RNAP catalytic core consists of 2 alpha, 1 beta, 1 beta' and 1 omega subunit. When a sigma factor is associated with the core the holoenzyme is formed, which can initiate transcription. The cofactor is Mg(2+). Zn(2+) is required as a cofactor.

It catalyses the reaction RNA(n) + a ribonucleoside 5'-triphosphate = RNA(n+1) + diphosphate. DNA-dependent RNA polymerase catalyzes the transcription of DNA into RNA using the four ribonucleoside triphosphates as substrates. The chain is DNA-directed RNA polymerase subunit beta' from Blochmanniella floridana.